The primary structure comprises 372 residues: Probable arabinan endo-1,5-alpha-L-arabinosidase B (372 aa).

Residues 1-16 (MTVLVALFCLVTWTLC) form the signal peptide. Residues 23-34 (STQGTQQPQQPE) are compositionally biased toward low complexity. The interval 23–52 (STQGTQQPQQPEKTPHPHPQPEDAFPPTHA) is disordered. Asp59 serves as the catalytic Proton acceptor. Asn120 is a glycosylation site (N-linked (GlcNAc...) asparagine). Catalysis depends on Glu252, which acts as the Proton donor. Asn363 carries an N-linked (GlcNAc...) asparagine glycan.

Belongs to the glycosyl hydrolase 43 family.

It is found in the secreted. It catalyses the reaction Endohydrolysis of (1-&gt;5)-alpha-arabinofuranosidic linkages in (1-&gt;5)-arabinans.. Its pathway is glycan metabolism; L-arabinan degradation. Functionally, endo-1,5-alpha-L-arabinanase involved in degradation of pectin. Its preferred substrate is linear 1,5-alpha-L-arabinan. The polypeptide is Probable arabinan endo-1,5-alpha-L-arabinosidase B (abnB) (Aspergillus fumigatus (strain ATCC MYA-4609 / CBS 101355 / FGSC A1100 / Af293) (Neosartorya fumigata)).